A 147-amino-acid polypeptide reads, in one-letter code: MKVTAATRSRARHFAMQAIYQWQMNGNPLHVIEAEFHTDNDMSKVDTEYFHELFHGVAADKSALDACFLPHLKSLPLEKLDPVTLALLRQATFELKNRVDVPYKVVINEAVNLAKKFGAEDSHKFVNGVLDKVAADLRALEFNAARS.

It belongs to the NusB family.

Functionally, involved in transcription antitermination. Required for transcription of ribosomal RNA (rRNA) genes. Binds specifically to the boxA antiterminator sequence of the ribosomal RNA (rrn) operons. The sequence is that of Transcription antitermination protein NusB from Teredinibacter turnerae (strain ATCC 39867 / T7901).